The primary structure comprises 341 residues: Basic membrane protein B (341 aa).

Residues 1 to 14 form the signal peptide; the sequence is MRIVIFIFGILLTS. C15 carries N-palmitoyl cysteine lipidation. C15 carries S-diacylglycerol cysteine lipidation.

This sequence belongs to the BMP lipoprotein family. Monomer.

It localises to the cell inner membrane. May be part of an ABC-type nucleoside uptake system involved in the purine salvage pathway. The sequence is that of Basic membrane protein B (bmpB) from Borreliella burgdorferi (strain ATCC 35210 / DSM 4680 / CIP 102532 / B31) (Borrelia burgdorferi).